The sequence spans 425 residues: Glutamyl-tRNA reductase (425 aa).

Residues 51–54, S111, 116–118, and Q122 contribute to the substrate site; these read TCNR and DMQ. The active-site Nucleophile is the C52. 191 to 196 is a binding site for NADP(+); it reads GLGEIG.

Belongs to the glutamyl-tRNA reductase family. In terms of assembly, homodimer.

The catalysed reaction is (S)-4-amino-5-oxopentanoate + tRNA(Glu) + NADP(+) = L-glutamyl-tRNA(Glu) + NADPH + H(+). Its pathway is porphyrin-containing compound metabolism; protoporphyrin-IX biosynthesis; 5-aminolevulinate from L-glutamyl-tRNA(Glu): step 1/2. Its function is as follows. Catalyzes the NADPH-dependent reduction of glutamyl-tRNA(Glu) to glutamate 1-semialdehyde (GSA). The protein is Glutamyl-tRNA reductase of Cytophaga hutchinsonii (strain ATCC 33406 / DSM 1761 / CIP 103989 / NBRC 15051 / NCIMB 9469 / D465).